Here is a 94-residue protein sequence, read N- to C-terminus: Small ribosomal subunit protein uS19c (94 aa).

The protein belongs to the universal ribosomal protein uS19 family.

Its subcellular location is the plastid. The protein localises to the chloroplast. Protein S19 forms a complex with S13 that binds strongly to the 16S ribosomal RNA. This is Small ribosomal subunit protein uS19c from Pleurastrum terricola (Filamentous green alga).